A 111-amino-acid chain; its full sequence is Cytochrome c (111 aa).

Ala1 bears the N-acetylalanine mark. Residues Cys22, Cys25, and His26 each coordinate heme c. Lys80 carries the N6,N6,N6-trimethyllysine modification. Met88 serves as a coordination point for heme c. Lys94 carries the N6,N6,N6-trimethyllysine modification.

This sequence belongs to the cytochrome c family. Post-translationally, binds 1 heme c group covalently per subunit.

It localises to the mitochondrion intermembrane space. Functionally, electron carrier protein. The oxidized form of the cytochrome c heme group can accept an electron from the heme group of the cytochrome c1 subunit of cytochrome reductase. Cytochrome c then transfers this electron to the cytochrome oxidase complex, the final protein carrier in the mitochondrial electron-transport chain. The polypeptide is Cytochrome c (Brassica napus (Rape)).